A 145-amino-acid polypeptide reads, in one-letter code: Large ribosomal subunit protein bL17 (145 aa).

The protein belongs to the bacterial ribosomal protein bL17 family. Part of the 50S ribosomal subunit. Contacts protein L32.

This is Large ribosomal subunit protein bL17 from Orientia tsutsugamushi (strain Ikeda) (Rickettsia tsutsugamushi).